Reading from the N-terminus, the 149-residue chain is Calmodulin (149 aa).

Position 2 is an N-acetylalanine (alanine 2). EF-hand domains follow at residues 8 to 43 (DQIS…LGQN), 44 to 79 (PTEA…KMKD), 81 to 116 (DSEE…LGEK), and 117 to 149 (LTDE…MMAK). Aspartate 21, aspartate 23, aspartate 25, cysteine 27, glutamate 32, aspartate 57, aspartate 59, asparagine 61, threonine 63, glutamate 68, aspartate 94, aspartate 96, asparagine 98, and glutamate 105 together coordinate Ca(2+). N6,N6,N6-trimethyllysine is present on lysine 116. Ca(2+) is bound by residues aspartate 130, aspartate 132, aspartate 134, glutamine 136, and glutamate 141.

The protein belongs to the calmodulin family.

In terms of biological role, calmodulin mediates the control of a large number of enzymes, ion channels and other proteins by Ca(2+). Among the enzymes to be stimulated by the calmodulin-Ca(2+) complex are a number of protein kinases and phosphatases. This is Calmodulin (CAM) from Malus domestica (Apple).